The sequence spans 269 residues: Formamidopyrimidine-DNA glycosylase (269 aa).

P2 acts as the Schiff-base intermediate with DNA in catalysis. Catalysis depends on E3, which acts as the Proton donor. K57 (proton donor; for beta-elimination activity) is an active-site residue. DNA-binding residues include H90, R109, and K150. The FPG-type zinc finger occupies 235-269 (LVYGKAGEPCPECGEPLQELKIGQRNTFFCNECQQ). The active-site Proton donor; for delta-elimination activity is R259.

The protein belongs to the FPG family. Monomer. The cofactor is Zn(2+).

It catalyses the reaction Hydrolysis of DNA containing ring-opened 7-methylguanine residues, releasing 2,6-diamino-4-hydroxy-5-(N-methyl)formamidopyrimidine.. The catalysed reaction is 2'-deoxyribonucleotide-(2'-deoxyribose 5'-phosphate)-2'-deoxyribonucleotide-DNA = a 3'-end 2'-deoxyribonucleotide-(2,3-dehydro-2,3-deoxyribose 5'-phosphate)-DNA + a 5'-end 5'-phospho-2'-deoxyribonucleoside-DNA + H(+). Involved in base excision repair of DNA damaged by oxidation or by mutagenic agents. Acts as a DNA glycosylase that recognizes and removes damaged bases. Has a preference for oxidized purines, such as 7,8-dihydro-8-oxoguanine (8-oxoG). Has AP (apurinic/apyrimidinic) lyase activity and introduces nicks in the DNA strand. Cleaves the DNA backbone by beta-delta elimination to generate a single-strand break at the site of the removed base with both 3'- and 5'-phosphates. The sequence is that of Formamidopyrimidine-DNA glycosylase from Vibrio parahaemolyticus serotype O3:K6 (strain RIMD 2210633).